An 854-amino-acid chain; its full sequence is Golgin subfamily A member 6-like protein 22 (854 aa).

Disordered stretches follow at residues 1–114, 320–348, 366–447, 481–568, 581–681, and 714–854; these read MLMW…HQEA, QEEK…MRRQ, MHEQ…MWRQ, QEEK…MWRQ, RQEE…EQEE, and QEEK…MQEH. A compositionally biased stretch (basic residues) spans 15 to 35; that stretch reads LPTHPHLPTHPHLPTHPHLPT. The span at 45–66 shows a compositional bias: basic and acidic residues; the sequence is MSKETRQSKLAEAKEQLTDHHP. Composition is skewed to polar residues over residues 67–77 and 85–97; these read QTNPSVGTAAS and NNGT…TSGG. The segment covering 100 to 114 has biased composition (basic and acidic residues); that stretch reads SPEDEQKASHQHQEA. Residues 103–854 are a coiled coil; sequence DEQKASHQHQ…RQQEEKMQEH (752 aa).

This sequence belongs to the GOLGA6 family.

This is Golgin subfamily A member 6-like protein 22 from Homo sapiens (Human).